Here is a 481-residue protein sequence, read N- to C-terminus: Amino acid permease 6 (481 aa).

Residues 1–36 (MEKKKSMFVEQSFPEHEIGDTNKNFDEDGRDKRTGT) lie on the Cytoplasmic side of the membrane. Transmembrane regions (helical) follow at residues 37–57 (WMTGSAHIITAVIGSGVLSLA) and 58–78 (WAIAQLGWVAGPAVLMAFSFI). Residues 79–125 (TYFTSTMLADCYRSPDPVTGKRNYTYMEVVRSYLGGRKVQLCGLAQY) lie on the Cytoplasmic side of the membrane. Residues 126–146 (GNLIGITIGYTITASISMVAV) form a helical membrane-spanning segment. Topologically, residues 147–167 (KRSNCFHKNGHNVKCATSNTP) are extracellular. The chain crosses the membrane as a helical span at residues 168–188 (FMIIFAIIQIILSQIPNFHNL). Residues 189–190 (SW) lie on the Cytoplasmic side of the membrane. A helical transmembrane segment spans residues 191–211 (LSILAAVMSFCYASIGVGLSI). Topologically, residues 212 to 242 (AKAAGGGEHVRTTLTGVTVGIDVSGAEKIWR) are extracellular. The chain crosses the membrane as a helical span at residues 243–263 (TFQAIGDIAFAYAYSTVLIEI). Over 264 to 283 (QDTLKAGPPSENKAMKRASL) the chain is Cytoplasmic. Residues 284–304 (VGVSTTTFFYMLCGCVGYAAF) traverse the membrane as a helical segment. Topologically, residues 305-321 (GNDAPGNFLTGFGFYEP) are extracellular. The helical transmembrane segment at 322 to 342 (FWLIDFANVCIAVHLIGAYQV) threads the bilayer. At 343-385 (FCQPIFQFVESQSAKRWPDNKFITGEYKIHVPCCGDFSINFLR) the chain is on the cytoplasmic side. Residues 386-405 (LVWRTSYVVVTAVVAMIFPF) traverse the membrane as a helical segment. The Extracellular segment spans residues 406–408 (FND). Residues 409–427 (FLGLIGAASFWPLTVYFPI) traverse the membrane as a helical segment. The Cytoplasmic portion of the chain corresponds to 428 to 447 (EMHIAQKKIPKFSFTWTWLK). Residues 448-468 (ILSWTCFIVSLVAAAGSVQGL) form a helical membrane-spanning segment. Residues 469-481 (IQSLKDFKPFQAP) lie on the Extracellular side of the membrane.

The protein belongs to the amino acid/polyamine transporter 2 family. Amino acid/auxin permease (AAAP) (TC 2.A.18.2) subfamily. As to expression, expressed in roots and leaves, and at lower levels in stems and flowers. Found in the xylem parenchyma.

It localises to the cell membrane. Functionally, amino acid-proton symporter. Stereospecific transporter with a broad specificity for tryptophan, proline, and neutral and acidic amino acids. Has an affinity for aspartate in a physiological range. Involved in the uptake of amino acids diffusing out of the xylem tracheids into the xylem parenchyma. The sequence is that of Amino acid permease 6 (AAP6) from Arabidopsis thaliana (Mouse-ear cress).